The primary structure comprises 329 residues: MAQSTLYSRVLGTGSYLPPDRVTNQQLTDRLAKEGIETSDEWIVARTGIHARHFAAPDVTTSDLALEASRRAIEAAGVDPQSIDLIIVATSTPDFVFPSTACLLQNKLGIKNGGAAFDVQAVCSGFAYAMATADSFIRSGQHRTALIVGAETFSRILDFKDRTTCVLFGDGAGAVILSASEEPGVLGSALHADGSYSNILCTPGNVNRGVIDGSAFLHMDGQAVFKLAVNVLEKVAIEALAKANLAPEQIDWLIPHQANIRIMTSTCRKLGLPQERMVVTVDQHGNTSAASIPLALDAAVRDGRIQRGQHVLIEGVGGGFTWGASVFRF.

Catalysis depends on residues Cys-123 and His-256. Positions 257 to 261 (QANIR) are ACP-binding. The active site involves Asn-286.

The protein belongs to the thiolase-like superfamily. FabH family. Homodimer.

The protein localises to the cytoplasm. It catalyses the reaction malonyl-[ACP] + acetyl-CoA + H(+) = 3-oxobutanoyl-[ACP] + CO2 + CoA. Its pathway is lipid metabolism; fatty acid biosynthesis. In terms of biological role, catalyzes the condensation reaction of fatty acid synthesis by the addition to an acyl acceptor of two carbons from malonyl-ACP. Catalyzes the first condensation reaction which initiates fatty acid synthesis and may therefore play a role in governing the total rate of fatty acid production. Possesses both acetoacetyl-ACP synthase and acetyl transacylase activities. Its substrate specificity determines the biosynthesis of branched-chain and/or straight-chain of fatty acids. This chain is Beta-ketoacyl-[acyl-carrier-protein] synthase III, found in Burkholderia cenocepacia (strain HI2424).